A 247-amino-acid polypeptide reads, in one-letter code: ATP synthase subunit a, chloroplastic (247 aa).

The next 5 membrane-spanning stretches (helical) occupy residues 38–58 (QVLI…ILVV), 95–115 (VPFI…GALL), 134–154 (INTT…AGIS), 199–219 (LVVV…VMFL), and 220–240 (GLFT…AYIG).

It belongs to the ATPase A chain family. F-type ATPases have 2 components, CF(1) - the catalytic core - and CF(0) - the membrane proton channel. CF(1) has five subunits: alpha(3), beta(3), gamma(1), delta(1), epsilon(1). CF(0) has four main subunits: a, b, b' and c.

It localises to the plastid. Its subcellular location is the chloroplast thylakoid membrane. Key component of the proton channel; it plays a direct role in the translocation of protons across the membrane. The chain is ATP synthase subunit a, chloroplastic from Pisum sativum (Garden pea).